Consider the following 445-residue polypeptide: uncharacterized protein (445 aa).

The next 8 helical transmembrane spans lie at 16–36 (IVSL…AFLI), 52–72 (LLAS…GYLL), 98–118 (VHSL…AGGC), 168–188 (GLMF…LGIV), 219–239 (ASAL…VWLI), 243–263 (GWSV…GALG), 283–303 (LIAA…NEGS), and 366–386 (AAYP…VPLV). Residues 417-445 (AWPNGPRRPGPPGQPRRVRQGGTAITPPT) are disordered.

It belongs to the major facilitator superfamily.

Its subcellular location is the cell membrane. This is an uncharacterized protein from Mycobacterium tuberculosis (strain ATCC 25618 / H37Rv).